The chain runs to 205 residues: Holliday junction branch migration complex subunit RuvA (205 aa).

Residues 1–64 are domain I; sequence MIGKLKGVID…EDQIKLFGFR (64 aa). A domain II region spans residues 65 to 143; it reads SDIEREWFRL…AFANVDPAVV (79 aa). The interval 144–154 is flexible linker; sequence HLAGAVDDDRA. The domain III stretch occupies residues 154–205; it reads APRPVKDAISALVNLGYGQPQAAAAIASVARDAGEGAETAQLIRLGLKELAK.

It belongs to the RuvA family. Homotetramer. Forms an RuvA(8)-RuvB(12)-Holliday junction (HJ) complex. HJ DNA is sandwiched between 2 RuvA tetramers; dsDNA enters through RuvA and exits via RuvB. An RuvB hexamer assembles on each DNA strand where it exits the tetramer. Each RuvB hexamer is contacted by two RuvA subunits (via domain III) on 2 adjacent RuvB subunits; this complex drives branch migration. In the full resolvosome a probable DNA-RuvA(4)-RuvB(12)-RuvC(2) complex forms which resolves the HJ.

It localises to the cytoplasm. Functionally, the RuvA-RuvB-RuvC complex processes Holliday junction (HJ) DNA during genetic recombination and DNA repair, while the RuvA-RuvB complex plays an important role in the rescue of blocked DNA replication forks via replication fork reversal (RFR). RuvA specifically binds to HJ cruciform DNA, conferring on it an open structure. The RuvB hexamer acts as an ATP-dependent pump, pulling dsDNA into and through the RuvAB complex. HJ branch migration allows RuvC to scan DNA until it finds its consensus sequence, where it cleaves and resolves the cruciform DNA. The protein is Holliday junction branch migration complex subunit RuvA of Afipia carboxidovorans (strain ATCC 49405 / DSM 1227 / KCTC 32145 / OM5) (Oligotropha carboxidovorans).